Here is a 449-residue protein sequence, read N- to C-terminus: Phosphoglucosamine mutase (449 aa).

S100 (phosphoserine intermediate) is an active-site residue. Positions 100, 241, 243, and 245 each coordinate Mg(2+). S100 carries the phosphoserine modification.

Belongs to the phosphohexose mutase family. Requires Mg(2+) as cofactor. In terms of processing, activated by phosphorylation.

It catalyses the reaction alpha-D-glucosamine 1-phosphate = D-glucosamine 6-phosphate. In terms of biological role, catalyzes the conversion of glucosamine-6-phosphate to glucosamine-1-phosphate. This chain is Phosphoglucosamine mutase, found in Clostridium botulinum (strain ATCC 19397 / Type A).